Consider the following 328-residue polypeptide: 4-hydroxythreonine-4-phosphate dehydrogenase (328 aa).

Substrate contacts are provided by His130 and Thr131. Positions 163, 208, and 263 each coordinate a divalent metal cation. Positions 271, 280, and 289 each coordinate substrate.

The protein belongs to the PdxA family. Homodimer. Requires Zn(2+) as cofactor. The cofactor is Mg(2+). Co(2+) serves as cofactor.

It localises to the cytoplasm. The enzyme catalyses 4-(phosphooxy)-L-threonine + NAD(+) = 3-amino-2-oxopropyl phosphate + CO2 + NADH. Its pathway is cofactor biosynthesis; pyridoxine 5'-phosphate biosynthesis; pyridoxine 5'-phosphate from D-erythrose 4-phosphate: step 4/5. Catalyzes the NAD(P)-dependent oxidation of 4-(phosphooxy)-L-threonine (HTP) into 2-amino-3-oxo-4-(phosphooxy)butyric acid which spontaneously decarboxylates to form 3-amino-2-oxopropyl phosphate (AHAP). In Burkholderia vietnamiensis (strain G4 / LMG 22486) (Burkholderia cepacia (strain R1808)), this protein is 4-hydroxythreonine-4-phosphate dehydrogenase.